Reading from the N-terminus, the 127-residue chain is Fumarate reductase subunit C (127 aa).

3 helical membrane passes run 30 to 50 (ATVL…GSLV), 67 to 87 (IVVA…QTFF), and 107 to 127 (VVVL…LVIV).

This sequence belongs to the FrdC family. Part of an enzyme complex containing four subunits: a flavoprotein (FrdA), an iron-sulfur protein (FrdB), and two hydrophobic anchor proteins (FrdC and FrdD).

Its subcellular location is the cell inner membrane. Its function is as follows. Anchors the catalytic components of the fumarate reductase complex to the cell membrane, binds quinones. The sequence is that of Fumarate reductase subunit C from Aliivibrio fischeri (strain ATCC 700601 / ES114) (Vibrio fischeri).